Here is a 348-residue protein sequence, read N- to C-terminus: Rhodopsin (348 aa).

Topologically, residues 1–33 (TEGPYFYVPMVNTTGIVRSPYEYPQYYLVNPAA) are extracellular. The N-linked (GlcNAc...) asparagine glycan is linked to Asn12. The chain crosses the membrane as a helical span at residues 34–58 (FAILGAYMFFLIIVGFPVNFMTLYV). Topologically, residues 59 to 70 (TLEHKKLRTPLN) are cytoplasmic. The helical transmembrane segment at 71 to 93 (YILLNLAVADLFMVIGGFTTTMY) threads the bilayer. Over 94–107 (TSMHGYFVLGRLGC) the chain is Extracellular. Cys107 and Cys184 are joined by a disulfide. The chain crosses the membrane as a helical span at residues 108 to 130 (NLEGFFATLGGMISLWSLAVLAI). The 'Ionic lock' involved in activated form stabilization signature appears at 131–133 (ERW). Residues 131-149 (ERWVVVCKPISNFRFGENH) lie on the Cytoplasmic side of the membrane. The helical transmembrane segment at 150-170 (AIMGVSLTWGMALACTVPPLV) threads the bilayer. At 171–199 (GWSRYIPEGMQCSCGIDYYTRAEGFNNET) the chain is on the extracellular side. Asn197 is a glycosylation site (N-linked (GlcNAc...) asparagine). Residues 200-221 (FVLYMFCCHFTVPLTIIFFCYG) traverse the membrane as a helical segment. The Cytoplasmic segment spans residues 222-249 (RLLCAVKEAAAAQQESETTQRAEREVTR). A helical membrane pass occupies residues 250–271 (MVVIMVIGFLVCWLPYASVAWF). The Extracellular segment spans residues 272 to 283 (VFTHQGSEFGPL). Residues 284-305 (FMTIPAFFAKSSAIYNPMIYIC) form a helical membrane-spanning segment. Lys293 carries the post-translational modification N6-(retinylidene)lysine. At 306–348 (MNKQFRHCMITTLFCGKNPFEGEEEGASSTKTEASSASSVSPA) the chain is on the cytoplasmic side. The S-palmitoyl cysteine moiety is linked to residue Cys320. The segment at 327-348 (GEEEGASSTKTEASSASSVSPA) is disordered. Positions 332–348 (ASSTKTEASSASSVSPA) are enriched in low complexity.

It belongs to the G-protein coupled receptor 1 family. Opsin subfamily. Post-translationally, phosphorylated on some or all of the serine and threonine residues present in the C-terminal region. Contains one covalently linked retinal chromophore.

It is found in the membrane. The protein resides in the cell projection. It localises to the cilium. The protein localises to the photoreceptor outer segment. Photoreceptor required for image-forming vision at low light intensity. While most salt water fish species use retinal as chromophore, most freshwater fish use 3-dehydroretinal, or a mixture of retinal and 3-dehydroretinal. Light-induced isomerization of 11-cis to all-trans retinal triggers a conformational change that activates signaling via G-proteins. Subsequent receptor phosphorylation mediates displacement of the bound G-protein alpha subunit by arrestin and terminates signaling. This is Rhodopsin (rho) from Sargocentron xantherythrum (Hawaiian squirrelfish).